The chain runs to 78 residues: Large ribosomal subunit protein bL28 (78 aa).

The interval 1–33 (MARKDDVTGEGPVTGNSVSDSNQKTNRRFKRNL) is disordered. Residues 14-24 (TGNSVSDSNQK) are compositionally biased toward polar residues.

It belongs to the bacterial ribosomal protein bL28 family.

The protein is Large ribosomal subunit protein bL28 of Salinibacter ruber (strain DSM 13855 / M31).